The following is a 983-amino-acid chain: Probable serine/threonine-protein kinase mps1 (983 aa).

The segment covering 1–18 has biased composition (polar residues); that stretch reads MDTHQSFNENQHPNFNSG. 5 disordered regions span residues 1-26, 252-430, 441-460, 513-601, and 654-691; these read MDTH…INMN, PQQQ…NNNY, NNDS…NSSV, QQQQ…QQQQ, and QQEQ…SEIV. The span at 253-278 shows a compositional bias: low complexity; that stretch reads QQQQQQQQQPYEISSSSSLMSTPASS. Over residues 279–301 the composition is skewed to polar residues; that stretch reads RHLSNRSSIVPTPNSSTKLSESI. Composition is skewed to low complexity over residues 319–329 and 348–371; these read TTTNFNTTTTT and NNNN…SYNK. Positions 374-403 are enriched in acidic residues; that stretch reads NDEDDQDEEDEEEEDEDEDDDEEDEEEYED. Residues 380-430 are a coiled coil; sequence DEEDEEEEDEDEDDDEEDEEEYEDNNNNNNNNNNNNNNNNNNNNNNNNNNY. A compositionally biased stretch (low complexity) spans 404–429; that stretch reads NNNNNNNNNNNNNNNNNNNNNNNNNN. Positions 474–517 form a coiled coil; that stretch reads KLDYENNVKLQQQQQQQQQQQQQQQQQQQQQQQQQYIQQQQQQQ. Positions 529-563 are enriched in low complexity; it reads NNTPTTTTTTTAATNVQNPSSSSSYISPPLSSQSS. The stretch at 588 to 665 forms a coiled coil; sequence SKLHQNNLQQ…EQQLKKTNMQ (78 aa). The span at 673 to 683 shows a compositional bias: low complexity; sequence QPQTQTQQQQK. The 268-residue stretch at 714-981 folds into the Protein kinase domain; that stretch reads YLRIEFIGKG…IPTLLNHDFL (268 aa). Residues 720–728 and K742 each bind ATP; that span reads IGKGGSGKV. D838 serves as the catalytic Proton acceptor.

Belongs to the protein kinase superfamily. Ser/Thr protein kinase family.

It catalyses the reaction L-seryl-[protein] + ATP = O-phospho-L-seryl-[protein] + ADP + H(+). The enzyme catalyses L-threonyl-[protein] + ATP = O-phospho-L-threonyl-[protein] + ADP + H(+). The sequence is that of Probable serine/threonine-protein kinase mps1 (mps1) from Dictyostelium discoideum (Social amoeba).